Consider the following 546-residue polypeptide: 2-isopropylmalate synthase (546 aa).

Residues 8–271 (ILIFDTTLRD…NSFFKRNPDS (264 aa)) form the Pyruvate carboxyltransferase domain. Residues D17, H208, H210, and N244 each contribute to the Mn(2+) site. Residues 408–546 (QLCLVQVSCG…NKTFLSNPAN (139 aa)) are regulatory domain.

The protein belongs to the alpha-IPM synthase/homocitrate synthase family. LeuA type 1 subfamily. Homodimer. It depends on Mn(2+) as a cofactor.

It localises to the cytoplasm. The enzyme catalyses 3-methyl-2-oxobutanoate + acetyl-CoA + H2O = (2S)-2-isopropylmalate + CoA + H(+). The protein operates within amino-acid biosynthesis; L-leucine biosynthesis; L-leucine from 3-methyl-2-oxobutanoate: step 1/4. Its function is as follows. Catalyzes the condensation of the acetyl group of acetyl-CoA with 3-methyl-2-oxobutanoate (2-ketoisovalerate) to form 3-carboxy-3-hydroxy-4-methylpentanoate (2-isopropylmalate). The polypeptide is 2-isopropylmalate synthase (Prochlorococcus marinus (strain MIT 9312)).